The primary structure comprises 253 residues: MKIIIAPAKIMKIDRDSFPVQSKPEFLDKTRILEEFLKSRSEDQLIELWHASKKVTEQSIEQLKNMNLDKRLTPAILAFSGIQYQYMAPDLFTQPALDYIQKNLRILSGFYGMLRPFDGVCPYRLELNTKMKGFIDYSLYHFWNDQIAESLFKEDDTVINLASKQYMRLVKPYLNENRKMITIDFQELKNDQWKTVGVHAKMARGEMVRFIAENQMKNPAELRDFHDFEFQYSPEASSLDHYVFRTHFDFKRH.

This sequence belongs to the UPF0246 family.

The protein is UPF0246 protein lhv_1883 of Lactobacillus helveticus (strain DPC 4571).